The sequence spans 374 residues: Chaperone protein DnaJ (374 aa).

The region spanning 5–70 (DYYEVLGVER…NKRAAYDQYG (66 aa)) is the J domain. Residues 133 to 211 (GTSVNIRVPT…CHGEGRVEEY (79 aa)) form a CR-type zinc finger. Residues Cys-146, Cys-149, Cys-163, Cys-166, Cys-185, Cys-188, Cys-199, and Cys-202 each contribute to the Zn(2+) site. CXXCXGXG motif repeat units follow at residues 146 to 153 (CKPCDGSG), 163 to 170 (CPTCGGIG), 185 to 192 (CPRCHGQG), and 199 to 206 (CDSCHGEG).

It belongs to the DnaJ family. Homodimer. The cofactor is Zn(2+).

The protein localises to the cytoplasm. Participates actively in the response to hyperosmotic and heat shock by preventing the aggregation of stress-denatured proteins and by disaggregating proteins, also in an autonomous, DnaK-independent fashion. Unfolded proteins bind initially to DnaJ; upon interaction with the DnaJ-bound protein, DnaK hydrolyzes its bound ATP, resulting in the formation of a stable complex. GrpE releases ADP from DnaK; ATP binding to DnaK triggers the release of the substrate protein, thus completing the reaction cycle. Several rounds of ATP-dependent interactions between DnaJ, DnaK and GrpE are required for fully efficient folding. Also involved, together with DnaK and GrpE, in the DNA replication of plasmids through activation of initiation proteins. The chain is Chaperone protein DnaJ from Pseudomonas fluorescens (strain SBW25).